Here is a 505-residue protein sequence, read N- to C-terminus: Glutamate--tRNA ligase (505 aa).

Residues 12–22 carry the 'HIGH' region motif; that stretch reads PSPTGDPHVGT. Residues 253 to 257 carry the 'KMSKS' region motif; sequence KLSKR. Lys256 provides a ligand contact to ATP.

Belongs to the class-I aminoacyl-tRNA synthetase family. Glutamate--tRNA ligase type 1 subfamily. Monomer.

Its subcellular location is the cytoplasm. The catalysed reaction is tRNA(Glu) + L-glutamate + ATP = L-glutamyl-tRNA(Glu) + AMP + diphosphate. Functionally, catalyzes the attachment of glutamate to tRNA(Glu) in a two-step reaction: glutamate is first activated by ATP to form Glu-AMP and then transferred to the acceptor end of tRNA(Glu). In Chlamydia abortus (strain DSM 27085 / S26/3) (Chlamydophila abortus), this protein is Glutamate--tRNA ligase.